Here is a 104-residue protein sequence, read N- to C-terminus: Pterin-4-alpha-carbinolamine dehydratase (104 aa).

Ala2 carries the N-acetylalanine modification. Substrate contacts are provided by residues 61-63 (DHH) and 78-81 (STHE).

The protein belongs to the pterin-4-alpha-carbinolamine dehydratase family. In terms of assembly, homotetramer and homodimer. Heterotetramer with HNF1A; formed by a dimer of dimers. Interacts with HNF1B (via HNF-p1 domain); the interaction increases HNF1B transactivation activity.

The protein resides in the cytoplasm. It is found in the nucleus. The enzyme catalyses (4aS,6R)-4a-hydroxy-L-erythro-5,6,7,8-tetrahydrobiopterin = (6R)-L-erythro-6,7-dihydrobiopterin + H2O. In terms of biological role, involved in tetrahydrobiopterin biosynthesis. Seems to both prevent the formation of 7-pterins and accelerate the formation of quinonoid-BH2. Coactivator for HNF1A-dependent transcription. Regulates the dimerization of homeodomain protein HNF1A and enhances its transcriptional activity. Also acts as a coactivator for HNF1B-dependent transcription. In Rattus norvegicus (Rat), this protein is Pterin-4-alpha-carbinolamine dehydratase (Pcbd1).